The chain runs to 275 residues: MKLISWNIDSLNAALTSDSARAKLSQEVLQTLVAENADIIAIQETKLSAKGPTKKHVEILEELFPGYENTWRSSQEPARKGYAGTMFLYKKELTPTISFPEIGAPSTMDLEGRIITLEFDAFFVTQVYTPNAGDGLKRLEERQVWDAKYAEYLAELDKEKPVLATGDYNVAHNEIDLANPASNRRSPGFTDEERAGFTNLLATGFTDTFRHVHGDVPERYTWWAQRSKTSKINNTGWRIDYWLTSNRIADKVTKSDMIDSGARQDHTPIVLEIDL.

Mg(2+) contacts are provided by aspartate 9 and glutamate 44. Tyrosine 128 is a catalytic residue. Positions 167, 169, and 265 each coordinate Mg(2+). The active-site Proton donor/acceptor is aspartate 167.

Belongs to the DNA repair enzymes AP/ExoA family. Mg(2+) serves as cofactor. The cofactor is Mn(2+).

Its subcellular location is the cytoplasm. It catalyses the reaction Exonucleolytic cleavage in the 3'- to 5'-direction to yield nucleoside 5'-phosphates.. In terms of biological role, in addition to 3'- to 5'-exonuclease and 3'-phosphatase activities, ExoA was shown to make single-strand breaks at apurinic sites in DNA. The sequence is that of Exodeoxyribonuclease (exoA) from Streptococcus pneumoniae serotype 4 (strain ATCC BAA-334 / TIGR4).